Reading from the N-terminus, the 229-residue chain is UPF0488 protein C8orf33 homolog (229 aa).

Alanine 2 is subject to N-acetylalanine. Arginine 27 carries the omega-N-methylarginine modification. The disordered stretch occupies residues 55–101; that stretch reads SRAHPLGDEGGTASKKQNKKKKTRNRASVANGGEKASEKLAPEEVPL. The segment covering 70-79 has biased composition (basic residues); the sequence is KQNKKKKTRN. Residue serine 82 is modified to Phosphoserine.

The protein belongs to the UPF0488 family.

This is UPF0488 protein C8orf33 homolog from Pongo abelii (Sumatran orangutan).